We begin with the raw amino-acid sequence, 427 residues long: Amino acid transporter AVT3A (427 aa).

The segment at 1–35 (MRYDQEAGSSSHSLPSGSSSHSLPPTEDTPLLGPR) is disordered. Over 1–42 (MRYDQEAGSSSHSLPSGSSSHSLPPTEDTPLLGPRTLSSQPK) the chain is Cytoplasmic. Positions 8-24 (GSSSHSLPSGSSSHSLP) are enriched in low complexity. The chain crosses the membrane as a helical span at residues 43-63 (TFANVFIAIVGAGVLGLPYTF). The Vacuolar portion of the chain corresponds to 64-69 (KKTGWL). The chain crosses the membrane as a helical span at residues 70–90 (LGLLTLLFVSSLTFFCMMLLV). The Cytoplasmic segment spans residues 91–122 (HTRRKLESLSGFNSITSFGDLGESVCGPAGRL). The chain crosses the membrane as a helical span at residues 123 to 143 (VVDVMLVLSQSGFCVSYLIFV). Topologically, residues 144–157 (ATTMANLLSRGTEH) are vacuolar. The helical transmembrane segment at 158 to 178 (ILGLDAASIYLWGCFPFQLGL) threads the bilayer. At 179–186 (NSIPSLTH) the chain is on the cytoplasmic side. A helical membrane pass occupies residues 187-207 (LAPLSIFADIVDVAATLVVMV). The Vacuolar portion of the chain corresponds to 208–227 (QDVFIFLKRRPPLRVFGGVS). The helical transmembrane segment at 228-248 (VFFYGLGVAVYAFEGIGMVLP) threads the bilayer. The Cytoplasmic portion of the chain corresponds to 249 to 262 (LELEAKYKDKFGRA). Residues 263–283 (LGLAMGLISIMYGAFGLLGYM) form a helical membrane-spanning segment. At 284–300 (AYGEETKDIITTNLGTG) the chain is on the vacuolar side. Residues 301 to 321 (VVSTLVQLGLAINLFFTFPLM) form a helical membrane-spanning segment. Over 322–339 (MQPVYEVVERRLCSSRYS) the chain is Cytoplasmic. Residues 340–360 (VWVRWATVLVVTLVALLVPNF) traverse the membrane as a helical segment. Residues 361–362 (AD) are Vacuolar-facing. A helical transmembrane segment spans residues 363–383 (FLSLVGSSVCVVLGFVLPSLF). Topologically, residues 384 to 396 (HLQAFKNELSITR) are cytoplasmic. The helical transmembrane segment at 397 to 417 (IVVDVLVFLIGVMIAITGTWT) threads the bilayer. The Vacuolar portion of the chain corresponds to 418-427 (AVHEILTSKA).

It belongs to the amino acid/polyamine transporter 2 family. Amino acid/auxin permease (AAAP) (TC 2.A.18.8) subfamily. As to expression, ubiquitous.

The protein resides in the vacuole membrane. In terms of biological role, translocates preferentially neutral amino acids and to a lesser extent aromatic amino acids from the vacuole to the cytoplasm. Requires ATP for function. The chain is Amino acid transporter AVT3A from Arabidopsis thaliana (Mouse-ear cress).